Reading from the N-terminus, the 341-residue chain is MQVKHLLLIAILALTAACSSNKETVDENLSESQLYQQAQDDLNNKSYNSAVTKLKALESRYPFGRYAEQAQLELIYANYKNMEPEAARAAAERFIRLHPQHPNVDYAYYLKGLSSFDQDRGLLARFLPLDMTKRDPGAARDSFNEFAQLTSRFPNSRYAPDAKARMVYLRNLLAAYEVHVGHYYLKRQAYVAAANRGRYVVENFQETPAVGDGLAIMVEAYRRLGLDDLASTSLETLKLNYPDNASLKDGEFVARESEADTRSWLAKATLGLIEGGEPPPHMETQAAKDVIKQYEDAEREIPAELKPENQDHSADDEKPESDDDEDSGRSWWSYMTFGLFD.

Positions 1-17 are cleaved as a signal peptide; that stretch reads MQVKHLLLIAILALTAA. Cys-18 is lipidated: N-palmitoyl cysteine. Cys-18 carries the S-diacylglycerol cysteine lipid modification. Residues 289–316 are compositionally biased toward basic and acidic residues; that stretch reads DVIKQYEDAEREIPAELKPENQDHSADD. The segment at 289–330 is disordered; that stretch reads DVIKQYEDAEREIPAELKPENQDHSADDEKPESDDDEDSGRS. Acidic residues predominate over residues 317–326; the sequence is EKPESDDDED.

Belongs to the BamD family. Part of the Bam complex.

The protein localises to the cell outer membrane. Functionally, part of the outer membrane protein assembly complex, which is involved in assembly and insertion of beta-barrel proteins into the outer membrane. This is Outer membrane protein assembly factor BamD from Pseudomonas aeruginosa (strain ATCC 15692 / DSM 22644 / CIP 104116 / JCM 14847 / LMG 12228 / 1C / PRS 101 / PAO1).